Reading from the N-terminus, the 288-residue chain is Quinate/shikimate dehydrogenase (288 aa).

Residues Lys-71 and Asp-107 each coordinate substrate. NAD(+) is bound by residues 132-135, 155-158, Lys-205, 232-235, and Gly-255; these read AGGA, NRRD, and CVYN.

This sequence belongs to the shikimate dehydrogenase family. As to quaternary structure, homodimer.

It catalyses the reaction L-quinate + NAD(+) = 3-dehydroquinate + NADH + H(+). It carries out the reaction L-quinate + NADP(+) = 3-dehydroquinate + NADPH + H(+). The catalysed reaction is shikimate + NADP(+) = 3-dehydroshikimate + NADPH + H(+). The enzyme catalyses shikimate + NAD(+) = 3-dehydroshikimate + NADH + H(+). The protein operates within metabolic intermediate biosynthesis; chorismate biosynthesis; chorismate from D-erythrose 4-phosphate and phosphoenolpyruvate: step 4/7. The actual biological function of YdiB remains unclear, nor is it known whether 3-dehydroshikimate or quinate represents the natural substrate. Catalyzes the reversible NAD-dependent reduction of both 3-dehydroshikimate (DHSA) and 3-dehydroquinate to yield shikimate (SA) and quinate, respectively. It can use both NAD or NADP for catalysis, however it has higher catalytic efficiency with NAD. This Escherichia coli (strain SMS-3-5 / SECEC) protein is Quinate/shikimate dehydrogenase.